Here is a 229-residue protein sequence, read N- to C-terminus: 2,3-bisphosphoglycerate-dependent phosphoglycerate mutase (229 aa).

Substrate-binding positions include 8 to 15, 21 to 22, arginine 60, 87 to 90, lysine 98, 114 to 115, and 183 to 184; these read RHGKSEWN, TG, ERHY, RR, and GN. The active-site Tele-phosphohistidine intermediate is histidine 9. Glutamate 87 acts as the Proton donor/acceptor in catalysis.

This sequence belongs to the phosphoglycerate mutase family. BPG-dependent PGAM subfamily. In terms of assembly, homodimer.

It carries out the reaction (2R)-2-phosphoglycerate = (2R)-3-phosphoglycerate. Its pathway is carbohydrate degradation; glycolysis; pyruvate from D-glyceraldehyde 3-phosphate: step 3/5. Catalyzes the interconversion of 2-phosphoglycerate and 3-phosphoglycerate. This Nautilia profundicola (strain ATCC BAA-1463 / DSM 18972 / AmH) protein is 2,3-bisphosphoglycerate-dependent phosphoglycerate mutase.